Consider the following 629-residue polypeptide: Myotonin-protein kinase (629 aa).

Over 1–590 (MSAEVRLRRL…PRPGLSEALS (590 aa)) the chain is Cytoplasmic. Residues 71–339 (FEILKVIGRG…AGDFRTHPFF (269 aa)) form the Protein kinase domain. Residues 77–85 (IGRGAFSEV) and lysine 100 contribute to the ATP site. Aspartate 195 (proton acceptor) is an active-site residue. 2 positions are modified to phosphoserine; by autocatalysis: serine 216 and serine 228. Threonine 234 is subject to Phosphothreonine; by autocatalysis. In terms of domain architecture, AGC-kinase C-terminal spans 340–415 (FGLDWDGLRD…SCMALRDSEV (76 aa)). The stretch at 457–536 (VPAAEAEAEV…LQAEGATAVT (80 aa)) forms a coiled coil. A helical; Anchor for type IV membrane protein membrane pass occupies residues 591-611 (LLLFAVVLSRAAALGCIGLVA). Over 612-629 (HAGQLTAVWRRPGAARAP) the chain is Lumenal.

It belongs to the protein kinase superfamily. AGC Ser/Thr protein kinase family. DMPK subfamily. Homodimer; homodimerization stimulates the kinase activity. Interacts with HSPB2; may enhance DMPK kinase activity. Interacts with PLN; phosphorylates PLN. May interact with RAC1; may regulate DMPK kinase activity. Interacts with LMNA; may regulate nuclear envelope stability. Mg(2+) is required as a cofactor. Post-translationally, phosphorylated. Autophosphorylates. Phosphorylation by RAF1 may result in activation of DMPK. Proteolytic processing of the C-terminus may remove the transmembrane domain and release the kinase from membranes stimulating its activity. Most isoforms are expressed in many tissues including heart, skeletal muscle, liver and brain, except for isoform 2 which is only found in the heart and skeletal muscle, and isoform 14 which is only found in the brain, with high levels in the striatum, cerebellar cortex and pons.

It localises to the endoplasmic reticulum membrane. It is found in the nucleus outer membrane. The protein resides in the mitochondrion outer membrane. Its subcellular location is the sarcoplasmic reticulum membrane. The protein localises to the cell membrane. It localises to the cytoplasm. It is found in the cytosol. The protein resides in the mitochondrion membrane. The catalysed reaction is L-seryl-[protein] + ATP = O-phospho-L-seryl-[protein] + ADP + H(+). The enzyme catalyses L-threonyl-[protein] + ATP = O-phospho-L-threonyl-[protein] + ADP + H(+). Its activity is regulated as follows. Coiled-coil-mediated oligomerization enhances the catalytic activity. Proteolytic processing of the C-terminus may release the protein from membranes and constitute a mean to regulate the enzyme. May be regulated by HSPB2, RAC1, RAF1 and G-protein second messengers. In terms of biological role, non-receptor serine/threonine protein kinase which is necessary for the maintenance of skeletal muscle structure and function. May play a role in myocyte differentiation and survival by regulating the integrity of the nuclear envelope and the expression of muscle-specific genes. May also phosphorylate PPP1R12A and inhibit the myosin phosphatase activity to regulate myosin phosphorylation. Also critical to the modulation of cardiac contractility and to the maintenance of proper cardiac conduction activity probably through the regulation of cellular calcium homeostasis. Phosphorylates PLN, a regulator of calcium pumps and may regulate sarcoplasmic reticulum calcium uptake in myocytes. May also phosphorylate FXYD1/PLM which is able to induce chloride currents. May also play a role in synaptic plasticity. This is Myotonin-protein kinase (DMPK) from Homo sapiens (Human).